Consider the following 440-residue polypeptide: Polycomb group protein VERNALIZATION 2 (440 aa).

The C2H2-type zinc-finger motif lies at 86 to 111 (EDCSCPFCSMLCGSFKGLQFHLNSSH). The short motif at 156 to 163 (KPRKRRQR) is the Nuclear localization signal element. The VEFS-box stretch occupies residues 267–345 (RQFYHSHRVQ…GHISWACEVF (79 aa)). Residues 398-440 (NNNNNSVDHPSDSNTNNNNIVDHPNDIKNKNNVDNKDNNSRDK) form a disordered region. Basic and acidic residues predominate over residues 420-440 (HPNDIKNKNNVDNKDNNSRDK).

The protein belongs to the VEFS (VRN2-EMF2-FIS2-SU(Z)12) family. In terms of assembly, probable component of a PcG complex. In plants, PcG complexes are probably composed of a member of the EZ family (CLF or MEA), FIE, and a member of the VEFS family (FIS2, VRN2 or EMF2). Component of the plant homeodomain / polycomb repressive complex 2 (PHD-PRC2) large complex during prolonged cold, composed of core PRC2 components (VRN2, EZA1, FIE and MSI1), and three related PHD finger proteins (VIL1, VIL2 and VIN3) that mediates histone H3 trimethylation on 'Lys-27' (H3K27me3). Binds to ALP1. Weakly expressed. Expressed both during, and in the absence of vernalization.

It localises to the nucleus. In terms of biological role, polycomb group (PcG) protein. Plays a central role in vernalization by maintaining repressed the homeotic gene FLC, a floral repressor, after a cold treatment. PcG proteins act by forming multiprotein complexes, which are required to maintain the transcriptionally repressive state of homeotic genes throughout development. PcG proteins are not required to initiate repression, but to maintain it during later stages of development. They probably act via the methylation of histones, rendering chromatin heritably changed in its expressibility. Associates constitutively along the whole FLC locus. This Arabidopsis thaliana (Mouse-ear cress) protein is Polycomb group protein VERNALIZATION 2 (VRN2).